A 196-amino-acid chain; its full sequence is MRLPLLVSAGVLLVALLPCPPCRALLSRGPVPGARQAPQHPQPLDFFQPPPQSEQPQQPQARPVLLRMGEEYFLRLGNLNKSPAAPLSPASSLLAGGSGSRPSPEQATANFFRVLLQQLLLPRRSLDSPAALAERGARNALGGHQEAPERERRSEEPPISLDLTFHLLREVLEMARAEQLAQQAHSNRKLMEIIGK.

An N-terminal signal peptide occupies residues 1–24 (MRLPLLVSAGVLLVALLPCPPCRA). A propeptide spanning residues 25 to 153 (LLSRGPVPGA…HQEAPERERR (129 aa)) is cleaved from the precursor. Disordered stretches follow at residues 32-61 (PGAR…QPQA), 85-105 (APLS…PSPE), and 136-158 (GARN…EEPP). 2 stretches are compositionally biased toward low complexity: residues 38–47 (PQHPQPLDFF) and 85–104 (APLS…RPSP). Basic and acidic residues predominate over residues 146 to 156 (EAPERERRSEE). An Isoleucine amide modification is found at I194.

This sequence belongs to the sauvagine/corticotropin-releasing factor/urotensin I family. In terms of assembly, interacts (via C-terminus) with CRFR1 (via N-terminal extracellular domain). As to expression, produced by the hypothalamus and placenta.

Its subcellular location is the secreted. Hormone regulating the release of corticotropin from pituitary gland. Induces NLRP6 in intestinal epithelial cells, hence may influence gut microbiota profile. The protein is Corticoliberin (CRH) of Homo sapiens (Human).